We begin with the raw amino-acid sequence, 155 residues long: cAMP-dependent protein kinase type II-alpha regulatory subunit (155 aa).

Residues 1–34 form a disordered region; it reads SGSQDLEPSSGLVTDAIADSESEDDEDLDVPIPS. Residues 1–81 form a dimerization and phosphorylation region; it reads SGSQDLEPSS…LQEACKDILL (81 aa). Positions 18–29 are enriched in acidic residues; that stretch reads ADSESEDDEDLD. Phosphoserine is present on residues serine 20 and serine 22. At serine 41 the chain carries Phosphoserine; by PKA. 3',5'-cyclic AMP contacts are provided by residues 82–155 and glutamate 150; that span reads FKNL…ALMY.

It belongs to the cAMP-dependent kinase regulatory chain family. In terms of assembly, the inactive form of the enzyme is composed of two regulatory chains and two catalytic chains. Activation by cAMP produces two active catalytic monomers and a regulatory dimer that binds four cAMP molecules. Interacts with AKAP4 and CBFA2T3. Interacts with the phosphorylated form of PJA2. Interacts with MYRIP; this interaction may link PKA to components of the exocytosis machinery, thus facilitating exocytosis, including insulin release. Forms a complex composed of PRKAR2A, GSK3B and GSKIP through GSKIP interaction; facilitates PKA-induced phosphorylation and regulates GSK3B activity. Interacts with ADCY8; inhibits adenylate cyclase activity through PKA phosphorylation. Phosphorylated by the activated catalytic chain. In terms of tissue distribution, four types of regulatory chains are found: I-alpha, I-beta, II-alpha, and II-beta. Their expression varies among tissues and is in some cases constitutive and in others inducible.

It is found in the cytoplasm. The protein localises to the cell membrane. Regulatory subunit of the cAMP-dependent protein kinases involved in cAMP signaling in cells. Type II regulatory chains mediate membrane association by binding to anchoring proteins, including the MAP2 kinase. This chain is cAMP-dependent protein kinase type II-alpha regulatory subunit (PRKAR2A), found in Sus scrofa (Pig).